A 342-amino-acid chain; its full sequence is Ribosomal RNA small subunit methyltransferase C (342 aa).

The protein belongs to the methyltransferase superfamily. RsmC family. Monomer.

Its subcellular location is the cytoplasm. The enzyme catalyses guanosine(1207) in 16S rRNA + S-adenosyl-L-methionine = N(2)-methylguanosine(1207) in 16S rRNA + S-adenosyl-L-homocysteine + H(+). Functionally, specifically methylates the guanine in position 1207 of 16S rRNA in the 30S particle. In Shewanella oneidensis (strain ATCC 700550 / JCM 31522 / CIP 106686 / LMG 19005 / NCIMB 14063 / MR-1), this protein is Ribosomal RNA small subunit methyltransferase C.